A 152-amino-acid chain; its full sequence is MSKVTGIVTELITPIVEEVGLELVDIEYKKEGSNWFLRVFIDNETGNIDIDDCRLVSEKLSEKLDEVDPIPTAYFLEVSSPGAERPLRKDKDFTKAVGRNVHITTKEPIEGATTFEGELVSYEDGKLTVKEAKKTYVISQEQIDTARMAIIF.

The protein belongs to the RimP family.

Its subcellular location is the cytoplasm. In terms of biological role, required for maturation of 30S ribosomal subunits. The sequence is that of Ribosome maturation factor RimP from Brevibacillus brevis (strain 47 / JCM 6285 / NBRC 100599).